Consider the following 343-residue polypeptide: Ribosomal RNA small subunit methyltransferase C (343 aa).

This sequence belongs to the methyltransferase superfamily. RsmC family. In terms of assembly, monomer.

Its subcellular location is the cytoplasm. The enzyme catalyses guanosine(1207) in 16S rRNA + S-adenosyl-L-methionine = N(2)-methylguanosine(1207) in 16S rRNA + S-adenosyl-L-homocysteine + H(+). Functionally, specifically methylates the guanine in position 1207 of 16S rRNA in the 30S particle. The polypeptide is Ribosomal RNA small subunit methyltransferase C (Escherichia coli (strain SMS-3-5 / SECEC)).